An 887-amino-acid chain; its full sequence is Lon protease homolog 2, peroxisomal (887 aa).

The 246-residue stretch at 11–256 folds into the Lon N-terminal domain; sequence LGILAFRNKV…KATELVDRHL (246 aa). The tract at residues 72-101 is disordered; sequence YPGGGTDSGERNVKSQPGLSDSRKADGKSQ. 409 to 416 lines the ATP pocket; it reads GPPGVGKT. One can recognise a Lon proteolytic domain in the interval 693-878; it reads VSNPGVSVGL…EVLEQAFEGG (186 aa). Active-site residues include Ser-784 and Lys-827. The Microbody targeting signal signature appears at 885–887; the sequence is ARL.

It belongs to the peptidase S16 family.

It localises to the peroxisome matrix. It catalyses the reaction Hydrolysis of proteins in presence of ATP.. In terms of biological role, ATP-dependent serine protease that mediates the selective degradation of misfolded and unassembled polypeptides in the peroxisomal matrix. Necessary for type 2 peroxisome targeting signal (PTS2)-containing protein processing and facilitates peroxisome matrix protein import. In Spinacia oleracea (Spinach), this protein is Lon protease homolog 2, peroxisomal.